Reading from the N-terminus, the 562-residue chain is Dihydroxy-acid dehydratase 1 (562 aa).

Residue Asp80 coordinates Mg(2+). Cys121 contributes to the [2Fe-2S] cluster binding site. 2 residues coordinate Mg(2+): Asp122 and Lys123. Residue Lys123 is modified to N6-carboxylysine. Cys194 lines the [2Fe-2S] cluster pocket. Glu446 serves as a coordination point for Mg(2+). The active-site Proton acceptor is Ser472.

The protein belongs to the IlvD/Edd family. As to quaternary structure, homodimer. [2Fe-2S] cluster serves as cofactor. Mg(2+) is required as a cofactor.

The enzyme catalyses (2R)-2,3-dihydroxy-3-methylbutanoate = 3-methyl-2-oxobutanoate + H2O. It carries out the reaction (2R,3R)-2,3-dihydroxy-3-methylpentanoate = (S)-3-methyl-2-oxopentanoate + H2O. It participates in amino-acid biosynthesis; L-isoleucine biosynthesis; L-isoleucine from 2-oxobutanoate: step 3/4. It functions in the pathway amino-acid biosynthesis; L-valine biosynthesis; L-valine from pyruvate: step 3/4. Functionally, functions in the biosynthesis of branched-chain amino acids. Catalyzes the dehydration of (2R,3R)-2,3-dihydroxy-3-methylpentanoate (2,3-dihydroxy-3-methylvalerate) into 2-oxo-3-methylpentanoate (2-oxo-3-methylvalerate) and of (2R)-2,3-dihydroxy-3-methylbutanoate (2,3-dihydroxyisovalerate) into 2-oxo-3-methylbutanoate (2-oxoisovalerate), the penultimate precursor to L-isoleucine and L-valine, respectively. This is Dihydroxy-acid dehydratase 1 from Staphylococcus saprophyticus subsp. saprophyticus (strain ATCC 15305 / DSM 20229 / NCIMB 8711 / NCTC 7292 / S-41).